The following is a 268-amino-acid chain: Inositol monophosphatase 3 (268 aa).

4 residues coordinate Mg(2+): Glu-71, Asp-91, Leu-93, and Asp-94. Glu-71 is a substrate binding site. Substrate is bound by residues 93–96 (LDGT), 194–196 (GSC), Glu-213, and Asp-221. A Mg(2+)-binding site is contributed by Asp-221.

This sequence belongs to the inositol monophosphatase superfamily. Mg(2+) serves as cofactor. As to expression, expressed in the shoot apex, roots, stems, leaves, flowers and young and mature green fruits.

The catalysed reaction is a myo-inositol phosphate + H2O = myo-inositol + phosphate. It participates in polyol metabolism; myo-inositol biosynthesis; myo-inositol from D-glucose 6-phosphate: step 2/2. Responsible for the provision of inositol required for synthesis of phosphatidylinositol and polyphosphoinositides. This is Inositol monophosphatase 3 (IMP3) from Solanum lycopersicum (Tomato).